The sequence spans 98 residues: Co-chaperonin GroES (98 aa).

The disordered stretch occupies residues 35–57; it reads EKPQEGKVISAGPGRVDDKGTRV.

Belongs to the GroES chaperonin family. As to quaternary structure, heptamer of 7 subunits arranged in a ring. Interacts with the chaperonin GroEL.

Its subcellular location is the cytoplasm. Functionally, together with the chaperonin GroEL, plays an essential role in assisting protein folding. The GroEL-GroES system forms a nano-cage that allows encapsulation of the non-native substrate proteins and provides a physical environment optimized to promote and accelerate protein folding. GroES binds to the apical surface of the GroEL ring, thereby capping the opening of the GroEL channel. This chain is Co-chaperonin GroES, found in Cutibacterium acnes (strain DSM 16379 / KPA171202) (Propionibacterium acnes).